The following is a 162-amino-acid chain: RNA pyrophosphohydrolase (162 aa).

Residues 7–149 (KYRPCVGIML…KKEVYKTVIE (143 aa)) enclose the Nudix hydrolase domain. Residues 40-61 (GGVDDGEELEQAALRELLEEVG) carry the Nudix box motif.

Belongs to the Nudix hydrolase family. RppH subfamily. A divalent metal cation is required as a cofactor.

In terms of biological role, accelerates the degradation of transcripts by removing pyrophosphate from the 5'-end of triphosphorylated RNA, leading to a more labile monophosphorylated state that can stimulate subsequent ribonuclease cleavage. The protein is RNA pyrophosphohydrolase of Wolbachia sp. subsp. Drosophila simulans (strain wRi).